The sequence spans 40 residues: Large ribosomal subunit protein bL36A (40 aa).

Belongs to the bacterial ribosomal protein bL36 family.

The chain is Large ribosomal subunit protein bL36A from Kineococcus radiotolerans (strain ATCC BAA-149 / DSM 14245 / SRS30216).